Reading from the N-terminus, the 681-residue chain is Structure-specific endonuclease subunit SLX4 (681 aa).

Disordered regions lie at residues 239-305 and 505-528; these read EREK…QEQL and EVTGEAEDGPSIIQVPSSPGNENL. A compositionally biased stretch (polar residues) spans 251–261; the sequence is SDSSPEPTQLL. Acidic residues predominate over residues 265–281; that stretch reads IIEEEHEVDEEEEDNEN. Composition is skewed to polar residues over residues 288–305 and 518–528; these read QLASSPTQISSDDTQEQL and QVPSSPGNENL.

It belongs to the SLX4 family. As to quaternary structure, forms a heterodimer with SLX1. In terms of processing, phosphorylated in response to DNA damage.

It localises to the nucleus. Regulatory subunit of the SLX1-SLX4 structure-specific endonuclease that resolves DNA secondary structures generated during DNA repair and recombination. Has endonuclease activity towards branched DNA substrates, introducing single-strand cuts in duplex DNA close to junctions with ss-DNA. This chain is Structure-specific endonuclease subunit SLX4, found in Meyerozyma guilliermondii (strain ATCC 6260 / CBS 566 / DSM 6381 / JCM 1539 / NBRC 10279 / NRRL Y-324) (Yeast).